The chain runs to 389 residues: MVQKRNHFLPYSLPLIGKEEIQEVTETLESGWLSKGPKVQQFEKEFAAFVGAKHAVAVNSCTAALFLALKAKGIGPGDEVITSPLTFSSTANTIIHTGATPVFADIDENTLNIDPVKLEAAVTPRTKAVVPVHFGGQSCDMDAILAVAQNHGLFVLEDAAHAVYTTYKQRMIGSIGDATAFSFYATKNLATGEGGMLTTDDEELADKIRVLSLHGMSKAAWNRYSSNGSWYYEVESPGYKMNMFDLQAALGLHQLKRLDDMQKRREEIAGRYQTAFQQIPGLITPFVHDDGRHAWHLYVLQVDEKKAGVTRSEMITALKDEYNIGTSVHFIPVHIHPYYQKQFGYKEADFPNAMNYYKRTLSLPLYPSMSDDDVDDVIEAVRDIVKGAD.

Lys-187 carries the post-translational modification N6-(pyridoxal phosphate)lysine.

The protein belongs to the DegT/DnrJ/EryC1 family. Requires pyridoxal 5'-phosphate as cofactor.

It participates in spore coat biogenesis; spore coat polysaccharide biosynthesis. The polypeptide is Spore coat polysaccharide biosynthesis protein SpsC (spsC) (Bacillus subtilis (strain 168)).